The chain runs to 298 residues: Oxygen-dependent coproporphyrinogen-III oxidase (298 aa).

A substrate-binding site is contributed by Ser92. His96 and His106 together coordinate a divalent metal cation. His106 serves as the catalytic Proton donor. Substrate is bound at residue 108–110 (NVR). Residues His145 and His175 each coordinate a divalent metal cation. The segment at 239–274 (YVEFNLVYDRGTLFGLQSGGRSESILMSLPPRVRWE) is important for dimerization. 257–259 (GGR) lines the substrate pocket.

The protein belongs to the aerobic coproporphyrinogen-III oxidase family. In terms of assembly, homodimer. A divalent metal cation serves as cofactor.

The protein resides in the cytoplasm. The enzyme catalyses coproporphyrinogen III + O2 + 2 H(+) = protoporphyrinogen IX + 2 CO2 + 2 H2O. It functions in the pathway porphyrin-containing compound metabolism; protoporphyrin-IX biosynthesis; protoporphyrinogen-IX from coproporphyrinogen-III (O2 route): step 1/1. Functionally, involved in the heme biosynthesis. Catalyzes the aerobic oxidative decarboxylation of propionate groups of rings A and B of coproporphyrinogen-III to yield the vinyl groups in protoporphyrinogen-IX. The sequence is that of Oxygen-dependent coproporphyrinogen-III oxidase from Stenotrophomonas maltophilia (strain R551-3).